Here is a 221-residue protein sequence, read N- to C-terminus: Translation initiation factor 6 (221 aa).

The protein belongs to the eIF-6 family.

Binds to the 50S ribosomal subunit and prevents its association with the 30S ribosomal subunit to form the 70S initiation complex. The protein is Translation initiation factor 6 of Natronomonas pharaonis (strain ATCC 35678 / DSM 2160 / CIP 103997 / JCM 8858 / NBRC 14720 / NCIMB 2260 / Gabara) (Halobacterium pharaonis).